A 716-amino-acid polypeptide reads, in one-letter code: Protein C-mannosyl-transferase DPY19L3 (716 aa).

Residues 1–43 lie on the Cytoplasmic side of the membrane; it reads MMSIRQRREIRATEVSEDFPAQEENVKLENKLPSGCTSRRLWK. Residues 44–64 traverse the membrane as a helical segment; that stretch reads ILSLTIGGTIALCIGLLTSVY. Over 65 to 154 the chain is Lumenal; that stretch reads LATLHENDLW…RVLPIQKYLE (90 aa). Residue N118 is glycosylated (N-linked (GlcNAc...) asparagine). The chain crosses the membrane as a helical span at residues 155–182; sequence PVYFYIYTLFGLQAIYVTALYITSWLLS. Over 183 to 184 the chain is Cytoplasmic; it reads GT. Positions 185–197 form an intramembrane region, name=3; the sequence is WLSGLLAAFWYVT. The Cytoplasmic portion of the chain corresponds to 198 to 215; the sequence is NRIDTTRVEFTIPLRENW. The name=4 intramembrane region spans 216 to 230; sequence ALPFFAIQIAAITYF. At 231 to 239 the chain is on the cytoplasmic side; the sequence is LRPNLQPLS. The chain crosses the membrane as a helical span at residues 240 to 256; that stretch reads ERLTLLAIFISTFLFSL. At 257–262 the chain is on the lumenal side; that stretch reads TWQFNQ. A helical transmembrane segment spans residues 263–279; sequence FMMLMQALVLFTLDSLD. Topologically, residues 280-289 are cytoplasmic; the sequence is MLPAVKATWL. Residues 290–306 form a helical membrane-spanning segment; the sequence is YGIQITSLLLVCILQFF. Topologically, residues 307–308 are lumenal; sequence NS. The chain crosses the membrane as a helical span at residues 309–323; the sequence is MILGSLLISFNLSVF. Residues 324–338 are Cytoplasmic-facing; the sequence is IARKLQKNLKTGSFL. Residues 339–359 form a helical membrane-spanning segment; the sequence is NRLGKLLLHLFMVLCLTLFLN. Topologically, residues 360-414 are lumenal; the sequence is NIIKKILNLKSDEHIFKFLKAKFGLGATRDFDANLYLCEEAFGLLPFNTFGRLSD. The chain crosses the membrane as a helical span at residues 415–437; the sequence is TLLFYAYIFVLSITVIVAFVVAF. At 438-465 the chain is on the cytoplasmic side; that stretch reads HNLSDSTNQQSVGKMEKGTVDLKPETAY. Residues 466 to 485 form a helical membrane-spanning segment; sequence NLIHTILFGFLALSTMRMKY. The Lumenal segment spans residues 486 to 487; the sequence is LW. Residues 488–499 traverse the membrane as a helical segment; sequence TSHMCVFASFGL. The Cytoplasmic portion of the chain corresponds to 500–522; it reads CSPEIWELLLKSVHLYNPKRICI. A helical transmembrane segment spans residues 523–539; the sequence is MRYSVPILILLYLCYKF. Residues 540 to 716 lie on the Lumenal side of the membrane; sequence WPGMMDELSE…FHVYKLSRNK (177 aa). N704 is a glycosylation site (N-linked (GlcNAc...) asparagine).

The protein belongs to the dpy-19 family. As to expression, widely expressed.

Its subcellular location is the endoplasmic reticulum membrane. It carries out the reaction L-tryptophyl-[protein] + a di-trans,poly-cis-dolichyl beta-D-mannosyl phosphate = C-alpha-D-mannosyl-L-tryptophyl-[protein] + a di-trans,poly-cis-dolichyl phosphate + H(+). The protein operates within protein modification; protein glycosylation. In terms of biological role, C-mannosyltransferase that mediates C-mannosylation of tryptophan residues on target proteins. The reaction occurs on the luminal side of the endoplasmic reticulum and involves the transfer of a mannose unit from a dolichylphosphate mannose (Dol-P-Man) donor to an acceptor protein containing a WxxW or WxxC consensus sequence. C-mannosylates RSPO1, a Wnt signaling regulator, preferentially at the first Trp residue in the sequence WxxW. C-mannosylates the netrin receptor UNC5A, preferentially at the third tryptophan of WxxWxxWxxC sequence. Its function is as follows. Has no C-mannosyltransferase activity. This is Protein C-mannosyl-transferase DPY19L3 (DPY19L3) from Homo sapiens (Human).